Reading from the N-terminus, the 631-residue chain is 1-deoxy-D-xylulose-5-phosphate synthase (631 aa).

Thiamine diphosphate is bound by residues His87 and 128 to 130 (GHS). Position 159 (Asp159) interacts with Mg(2+). Thiamine diphosphate contacts are provided by residues 160-161 (GA), Asn188, Phe295, and Glu377. Asn188 contributes to the Mg(2+) binding site.

This sequence belongs to the transketolase family. DXPS subfamily. In terms of assembly, homodimer. The cofactor is Mg(2+). Requires thiamine diphosphate as cofactor.

The catalysed reaction is D-glyceraldehyde 3-phosphate + pyruvate + H(+) = 1-deoxy-D-xylulose 5-phosphate + CO2. It functions in the pathway metabolic intermediate biosynthesis; 1-deoxy-D-xylulose 5-phosphate biosynthesis; 1-deoxy-D-xylulose 5-phosphate from D-glyceraldehyde 3-phosphate and pyruvate: step 1/1. Functionally, catalyzes the acyloin condensation reaction between C atoms 2 and 3 of pyruvate and glyceraldehyde 3-phosphate to yield 1-deoxy-D-xylulose-5-phosphate (DXP). This chain is 1-deoxy-D-xylulose-5-phosphate synthase, found in Pseudomonas entomophila (strain L48).